A 364-amino-acid chain; its full sequence is D-alanine--D-alanine ligase A (364 aa).

The region spanning 145–348 (KRLLRDAGLN…YTDLITRLIE (204 aa)) is the ATP-grasp domain. Residue 175–230 (ESKLGLPLFVKPANQGSSVGVSKVTSEEQYAIAVDLAFEFDHKVIVEQGIKGREIE) coordinates ATP. Residues Asp-302, Glu-315, and Asn-317 each contribute to the Mg(2+) site.

Belongs to the D-alanine--D-alanine ligase family. Requires Mg(2+) as cofactor. Mn(2+) is required as a cofactor.

The protein localises to the cytoplasm. The enzyme catalyses 2 D-alanine + ATP = D-alanyl-D-alanine + ADP + phosphate + H(+). It functions in the pathway cell wall biogenesis; peptidoglycan biosynthesis. In terms of biological role, cell wall formation. The protein is D-alanine--D-alanine ligase A (ddlA) of Escherichia coli O157:H7.